We begin with the raw amino-acid sequence, 264 residues long: 4-hydroxy-tetrahydrodipicolinate reductase (264 aa).

10–15 (GCLGRQ) is a binding site for NAD(+). R37 is an NADP(+) binding site. NAD(+)-binding positions include 99 to 101 (GTT) and 121 to 124 (SANL). H153 (proton donor/acceptor) is an active-site residue. H154 is a binding site for (S)-2,3,4,5-tetrahydrodipicolinate. Residue K157 is the Proton donor of the active site. 163-164 (GT) lines the (S)-2,3,4,5-tetrahydrodipicolinate pocket.

Belongs to the DapB family.

Its subcellular location is the cytoplasm. The enzyme catalyses (S)-2,3,4,5-tetrahydrodipicolinate + NAD(+) + H2O = (2S,4S)-4-hydroxy-2,3,4,5-tetrahydrodipicolinate + NADH + H(+). It catalyses the reaction (S)-2,3,4,5-tetrahydrodipicolinate + NADP(+) + H2O = (2S,4S)-4-hydroxy-2,3,4,5-tetrahydrodipicolinate + NADPH + H(+). Its pathway is amino-acid biosynthesis; L-lysine biosynthesis via DAP pathway; (S)-tetrahydrodipicolinate from L-aspartate: step 4/4. Catalyzes the conversion of 4-hydroxy-tetrahydrodipicolinate (HTPA) to tetrahydrodipicolinate. The protein is 4-hydroxy-tetrahydrodipicolinate reductase of Ehrlichia ruminantium (strain Gardel).